Consider the following 705-residue polypeptide: Polyribonucleotide nucleotidyltransferase (705 aa).

Positions 487 and 493 each coordinate Mg(2+). Residues 554 to 613 (PKILTMAIEPDKIRDVIGPSGKQINQIIDETGVKIDIEQDGSIFISSTDNEMNKKAKQII) form the KH domain. One can recognise an S1 motif domain in the interval 623-691 (GQIYLGKVKR…RQGRVNLSRK (69 aa)).

This sequence belongs to the polyribonucleotide nucleotidyltransferase family. Mg(2+) serves as cofactor.

It localises to the cytoplasm. It carries out the reaction RNA(n+1) + phosphate = RNA(n) + a ribonucleoside 5'-diphosphate. In terms of biological role, involved in mRNA degradation. Catalyzes the phosphorolysis of single-stranded polyribonucleotides processively in the 3'- to 5'-direction. This is Polyribonucleotide nucleotidyltransferase from Oceanobacillus iheyensis (strain DSM 14371 / CIP 107618 / JCM 11309 / KCTC 3954 / HTE831).